Reading from the N-terminus, the 72-residue chain is Translation initiation factor IF-1 (72 aa).

Residues methionine 1 to lysine 72 enclose the S1-like domain.

Belongs to the IF-1 family. As to quaternary structure, component of the 30S ribosomal translation pre-initiation complex which assembles on the 30S ribosome in the order IF-2 and IF-3, IF-1 and N-formylmethionyl-tRNA(fMet); mRNA recruitment can occur at any time during PIC assembly.

The protein resides in the cytoplasm. One of the essential components for the initiation of protein synthesis. Stabilizes the binding of IF-2 and IF-3 on the 30S subunit to which N-formylmethionyl-tRNA(fMet) subsequently binds. Helps modulate mRNA selection, yielding the 30S pre-initiation complex (PIC). Upon addition of the 50S ribosomal subunit IF-1, IF-2 and IF-3 are released leaving the mature 70S translation initiation complex. The polypeptide is Translation initiation factor IF-1 (Levilactobacillus brevis (strain ATCC 367 / BCRC 12310 / CIP 105137 / JCM 1170 / LMG 11437 / NCIMB 947 / NCTC 947) (Lactobacillus brevis)).